The chain runs to 273 residues: 4-hydroxy-tetrahydrodipicolinate reductase (273 aa).

12-17 (GAGGRM) serves as a coordination point for NAD(+). R39 lines the NADP(+) pocket. Residues 102–104 (GTT) and 126–129 (AANF) contribute to the NAD(+) site. H159 (proton donor/acceptor) is an active-site residue. H160 contacts (S)-2,3,4,5-tetrahydrodipicolinate. K163 (proton donor) is an active-site residue. Residue 169-170 (GT) participates in (S)-2,3,4,5-tetrahydrodipicolinate binding.

This sequence belongs to the DapB family. In terms of assembly, homotetramer.

Its subcellular location is the cytoplasm. The enzyme catalyses (S)-2,3,4,5-tetrahydrodipicolinate + NAD(+) + H2O = (2S,4S)-4-hydroxy-2,3,4,5-tetrahydrodipicolinate + NADH + H(+). It carries out the reaction (S)-2,3,4,5-tetrahydrodipicolinate + NADP(+) + H2O = (2S,4S)-4-hydroxy-2,3,4,5-tetrahydrodipicolinate + NADPH + H(+). Its pathway is amino-acid biosynthesis; L-lysine biosynthesis via DAP pathway; (S)-tetrahydrodipicolinate from L-aspartate: step 4/4. Functionally, catalyzes the conversion of 4-hydroxy-tetrahydrodipicolinate (HTPA) to tetrahydrodipicolinate. In Sodalis glossinidius (strain morsitans), this protein is 4-hydroxy-tetrahydrodipicolinate reductase.